Consider the following 525-residue polypeptide: Cytochrome P450 4V2 (525 aa).

Residues 13–33 (LLLWGAASALSLAGASLVLSL) traverse the membrane as a helical segment. Heme-binding residues include Glu-329 and Cys-467.

It belongs to the cytochrome P450 family. The cofactor is heme. In terms of tissue distribution, broadly expressed. Detected in heart, brain, placenta, lung, liver, skeletal muscle, kidney, pancreas, retina, retinal pigment epithelium (RPE) and lymphocytes.

It is found in the endoplasmic reticulum membrane. The enzyme catalyses dodecanoate + reduced [NADPH--hemoprotein reductase] + O2 = 12-hydroxydodecanoate + oxidized [NADPH--hemoprotein reductase] + H2O + H(+). The catalysed reaction is tetradecanoate + reduced [NADPH--hemoprotein reductase] + O2 = 14-hydroxytetradecanoate + oxidized [NADPH--hemoprotein reductase] + H2O + H(+). It carries out the reaction hexadecanoate + reduced [NADPH--hemoprotein reductase] + O2 = 16-hydroxyhexadecanoate + oxidized [NADPH--hemoprotein reductase] + H2O + H(+). It catalyses the reaction (5Z,8Z,11Z,14Z,17Z)-eicosapentaenoate + reduced [NADPH--hemoprotein reductase] + O2 = 20-hydroxy-(5Z,8Z,11Z,14Z,17Z)-eicosapentaenoate + oxidized [NADPH--hemoprotein reductase] + H2O + H(+). The enzyme catalyses (4Z,7Z,10Z,13Z,16Z,19Z)-docosahexaenoate + reduced [NADPH--hemoprotein reductase] + O2 = 22-hydroxy-(4Z,7Z,10Z,13Z,16Z,19Z)-docosahexaenoate + oxidized [NADPH--hemoprotein reductase] + H2O + H(+). The protein operates within lipid metabolism; fatty acid metabolism. Inhibited by N-hydroxy-N'-(4-n-butyl-2-methylphenyl formamidine)(HET0016) with an IC(50) of 38 nM. A cytochrome P450 monooxygenase involved in fatty acid metabolism in the eye. Catalyzes the omega-hydroxylation of polyunsaturated fatty acids (PUFAs) docosahexaenoate (DHA) and its precursor eicosapentaenoate (EPA), and may contribute to the homeostasis of these retinal PUFAs. Omega hydroxylates saturated fatty acids such as laurate, myristate and palmitate, the catalytic efficiency decreasing in the following order: myristate &gt; laurate &gt; palmitate (C14&gt;C12&gt;C16). Mechanistically, uses molecular oxygen inserting one oxygen atom into a substrate, and reducing the second into a water molecule, with two electrons provided by NADPH via cytochrome P450 reductase (CPR; NADPH-ferrihemoprotein reductase). The chain is Cytochrome P450 4V2 (CYP4V2) from Homo sapiens (Human).